A 405-amino-acid polypeptide reads, in one-letter code: Nicotinate phosphoribosyltransferase (405 aa).

A Phosphohistidine; by autocatalysis modification is found at histidine 230.

It belongs to the NAPRTase family. In terms of processing, transiently phosphorylated on a His residue during the reaction cycle. Phosphorylation strongly increases the affinity for substrates and increases the rate of nicotinate D-ribonucleotide production. Dephosphorylation regenerates the low-affinity form of the enzyme, leading to product release.

It carries out the reaction nicotinate + 5-phospho-alpha-D-ribose 1-diphosphate + ATP + H2O = nicotinate beta-D-ribonucleotide + ADP + phosphate + diphosphate. It functions in the pathway cofactor biosynthesis; NAD(+) biosynthesis; nicotinate D-ribonucleotide from nicotinate: step 1/1. In terms of biological role, catalyzes the synthesis of beta-nicotinate D-ribonucleotide from nicotinate and 5-phospho-D-ribose 1-phosphate at the expense of ATP. This is Nicotinate phosphoribosyltransferase from Bordetella pertussis (strain Tohama I / ATCC BAA-589 / NCTC 13251).